The chain runs to 1263 residues: MSILYVSPHPDAFPSLRALIAARYGEAGDGPGWGGPHPRICLQPPPSSRTPFPPPRLPALEQGPGGLWVWGAPAVAQLLWPAGLGGPGGSRAAVLVQQWVSYADTELIPAACGATLPALGLRGPGQDPQAALGALGKALNPLEDWLRLHTYLAGDAPTLADLAAVTALLLPFRYVLDPSARRIWGNVTRWFNTCVRQPEFRAVLGEVALYSGARSVTQQPGSEVIAPQKTPAQLKKEAKKREKLEKFQQKQKTQQQPPHGEKKPKPEKKEKRDPGVITYDLPTPPGEKKDVSGAMPDSYSPQYVEAAWYPWWERQGFFKPEYGRPSVSAPNPRGVFMMCIPPPNVTGSLHLGHALTNAIQDSLTRWHRMRGETTLWNPGCDHAGIATQVVVEKKLWKERGLNRHQLGREAFLEEVWKWKAEKGDRIYHQLKKLGSSLDWDRACFTMDPKLSATVTEAFVRLHEEGVIYRSTRLVNWSCTLNSAISDIEVDKKELTGRTLLPVPGYKEKVEFGVLVSFAYKVQGSDSDEEVVVATTRIETMLGDVAVAVHPKDPRYQHLKGKCVVHPFLSRSLPIVFDDFVDMEFGTGAVKITPAHDQNDYEVGQRHRLEAISIMDSKGALINVPPPFLGLPRFEARKAVLAALKERGLFRGVKDNPMVVPLCNRSKDVVEPLLRPQWYVRCGEMAQAASAAVTRGDLRILPEAHQRTWHSWMDNIRDWCISRQLWWGHRIPAYFITVHDPAVPPGEDPDGRYWVSGRTEAEAREKAAREFGVSPDKISLQQDEDVLDTWFSSGLFPFSIFGWPNQSEDLSVFYPGTLLETGHDILFFWVARMVMLGLKLTGKLPFREVYLHAIVRDAHGRKMSKSLGNVIDPLDVIHGVSLQGLYDQLLNSNLDPSEVEKAKEGQKADFPAGIPECGTDALRFGLCAYTSQGRDINLDVNRILGYRHFCNKLWNATKFALRGLGKGFVPSATSKPEGHESLVDRWIRSRLTEAVRLSNEGFQAYDFPAITTAQYSFWLYELCDVYLECLKPVLNGVDQVAAECARQTLYTCLDVGLRLLSPFMPFVTEELFQRLPRRTPKAPASLCVTPYPEPSECSWKDPEAEAALELALSITRAVRSLRADYNLTRTRPDCFLEVADEATGALASAVSGYVQALASAGVVAVLALGAPAPQGCAVAVASDRCSIHLQLQGLVDPARELGKLQAKRSEAQRQAQRLQERRAASSYSAKVPLEVQEADEAKLQQTEAELRKVDEAIALFQKML.

Residue serine 2 is modified to N-acetylserine. One can recognise a GST C-terminal domain in the interval 89–219 (GSRAAVLVQQ…YSGARSVTQQ (131 aa)). The segment at 218-294 (QQPGSEVIAP…PGEKKDVSGA (77 aa)) is disordered. Basic and acidic residues-rich tracts occupy residues 234-248 (LKKEAKKREKLEKFQ) and 259-274 (HGEKKPKPEKKEKRDP). The short motif at 343–353 (PNVTGSLHLGH) is the 'HIGH' region element. A phosphoserine mark is found at serine 436 and serine 526. Lysine 644 bears the N6-acetyllysine mark. Positions 861 to 865 (KMSKS) match the 'KMSKS' region motif. Lysine 864 serves as a coordination point for ATP.

It belongs to the class-I aminoacyl-tRNA synthetase family. In terms of assembly, forms high-molecular-mass aggregates with elongation factor 1.

The catalysed reaction is tRNA(Val) + L-valine + ATP = L-valyl-tRNA(Val) + AMP + diphosphate. Can be regulated by protein kinase C-dependent phosphorylation. The chain is Valine--tRNA ligase (Vars1) from Mus musculus (Mouse).